Consider the following 444-residue polypeptide: Putative permease IIC component YwbA (444 aa).

The region spanning 8–421 is the PTS EIIC type-3 domain; that stretch reads MEEKIMPVAG…LITCAIYYPF (414 aa). 10 helical membrane-spanning segments follow: residues 31-51, 72-92, 104-124, 138-158, 187-207, 223-243, 246-266, 291-311, 349-371, and 402-422; these read GIILTMPLIIIGSVFLILTSL, LGYPVNASFDIMAMIAAFGIA, LSAGAISIAAFLLATPFEVPF, GIPITLLGSKGLFVAMLIALF, FVALIPGFIIVLLVWLARLLI, LGTPLSILGGSLGGSLIAEFV, LLWSCGIHGASIIGGIMAPIW, FFQIWINVGGSGATLALVLTM, PLLIVPFIIAPLLTITATYIGMS, and SGAVMQLVNLLITCAIYYPFF.

It is found in the cell membrane. In terms of biological role, the phosphoenolpyruvate-dependent sugar phosphotransferase system (PTS), a major carbohydrate active -transport system, catalyzes the phosphorylation of incoming sugar substrates concomitant with their translocation across the cell membrane. In Bacillus subtilis (strain 168), this protein is Putative permease IIC component YwbA (ywbA).